Consider the following 299-residue polypeptide: Fructose-1,6-bisphosphatase class 1 (299 aa).

The Mg(2+) site is built by glutamate 79, aspartate 98, leucine 100, and aspartate 101. Substrate is bound by residues 101–104 (DGSS), tyrosine 207, and lysine 238. A Mg(2+)-binding site is contributed by glutamate 244.

This sequence belongs to the FBPase class 1 family. Homotetramer. The cofactor is Mg(2+).

It is found in the cytoplasm. The enzyme catalyses beta-D-fructose 1,6-bisphosphate + H2O = beta-D-fructose 6-phosphate + phosphate. It participates in carbohydrate biosynthesis; gluconeogenesis. The chain is Fructose-1,6-bisphosphatase class 1 from Campylobacter curvus (strain 525.92).